Reading from the N-terminus, the 498-residue chain is ATP synthase subunit beta, chloroplastic (498 aa).

An ATP-binding site is contributed by glycine 172–threonine 179.

Belongs to the ATPase alpha/beta chains family. In terms of assembly, F-type ATPases have 2 components, CF(1) - the catalytic core - and CF(0) - the membrane proton channel. CF(1) has five subunits: alpha(3), beta(3), gamma(1), delta(1), epsilon(1). CF(0) has four main subunits: a(1), b(1), b'(1) and c(9-12).

It is found in the plastid. The protein localises to the chloroplast thylakoid membrane. The enzyme catalyses ATP + H2O + 4 H(+)(in) = ADP + phosphate + 5 H(+)(out). Its function is as follows. Produces ATP from ADP in the presence of a proton gradient across the membrane. The catalytic sites are hosted primarily by the beta subunits. This Nypa fruticans (Nypa palm) protein is ATP synthase subunit beta, chloroplastic.